A 476-amino-acid polypeptide reads, in one-letter code: MSVITRFAPSPTGFLHIGGARTALFNWLYAKHTGGKMLLRIEDTDRERSTEAAVRAIIDGLHWMGLSYDGSPISQFERAERHRQIAEQLVENGKAYYCYASPEELAEMREKARAEGRPPRYDGRWRNRDHSEAPQGIKPVIRIKAPEDGETIVHDRVQGDVRFPNKDLDDFIILRSDGSPTYMHAVVVDDHDMGVTHIIRGDDHLTNAARQTIIFKAMGWDIPVMAHIPLIHGENGAKLSKRHGALGVDAYRTMGYLPAALRNYLVRLGWSHGDDELMSLQDMISWFDIEDINKGAARFDLKKLDSINGHYMRMSNDQELFDAALDILPETDGGTEIIERLDEQRRVQFLKAIPHLKERSKTLCELIDNASFIFTQRPLQLNEKAQMLLDKNGRTILNDLYLALKACPSWDTKALDETLRSYIQTQNLKFGSIAQPLRAALTGCTTSPGVLDVLILLGRDESLYRINDQLITTVGL.

The short motif at 9–19 is the 'HIGH' region element; sequence PSPTGFLHIGG. The 'KMSKS' region signature appears at 238–242; that stretch reads KLSKR. K241 serves as a coordination point for ATP.

It belongs to the class-I aminoacyl-tRNA synthetase family. Glutamate--tRNA ligase type 1 subfamily. As to quaternary structure, monomer.

Its subcellular location is the cytoplasm. The enzyme catalyses tRNA(Glu) + L-glutamate + ATP = L-glutamyl-tRNA(Glu) + AMP + diphosphate. Catalyzes the attachment of glutamate to tRNA(Glu) in a two-step reaction: glutamate is first activated by ATP to form Glu-AMP and then transferred to the acceptor end of tRNA(Glu). This chain is Glutamate--tRNA ligase 1, found in Bartonella tribocorum (strain CIP 105476 / IBS 506).